The chain runs to 683 residues: Leucine-rich repeat and calponin homology domain-containing protein 4 (683 aa).

Positions Met1–Ala18 are enriched in low complexity. The interval Met1–Ala34 is disordered. LRR repeat units lie at residues Ala41 to Ser64, Leu67 to Leu90, Ser92 to Leu113, Thr114 to Leu136, Leu138 to Leu158, Gly159 to Leu181, Ser182 to Leu204, Leu206 to Leu226, and Arg227 to Gly250. Positions Ala268–His292 are disordered. Ser279, Ser281, Ser304, Ser307, Ser309, and Ser313 each carry phosphoserine. 2 disordered regions span residues Phe326–Pro436 and Ser449–Asp539. 3 stretches are compositionally biased toward basic and acidic residues: residues Glu330–Gly345, Ile357–Pro376, and Gly384–Gln418. Phosphoserine is present on residues Ser432 and Ser457. Polar residues predominate over residues Ser449–Ser460. Low complexity-rich tracts occupy residues Ser461–Gln481 and Ser511–Ser524. A phosphoserine mark is found at Ser511, Ser513, Ser517, Ser521, and Ser589. The 114-residue stretch at Val534–Gly647 folds into the Calponin-homology (CH) domain. Residues Leu653–Leu673 form a helical membrane-spanning segment.

Its subcellular location is the cell membrane. Its function is as follows. Accessory protein that regulates signaling by multiple TLRs, acting as a broad-spanning regulator of the innate immune response. In macrophages, binds LPS and promotes proper docking of LPS in lipid raft membrane. May be required for lipid raft maintenance. The polypeptide is Leucine-rich repeat and calponin homology domain-containing protein 4 (Homo sapiens (Human)).